Consider the following 381-residue polypeptide: Mannitol-1-phosphate 5-dehydrogenase (381 aa).

3–14 (AVHFGAGNIGRG) contributes to the NAD(+) binding site.

This sequence belongs to the mannitol dehydrogenase family.

It catalyses the reaction D-mannitol 1-phosphate + NAD(+) = beta-D-fructose 6-phosphate + NADH + H(+). The chain is Mannitol-1-phosphate 5-dehydrogenase from Photobacterium profundum (strain SS9).